Reading from the N-terminus, the 244-residue chain is Lipid A 1-phosphatase (244 aa).

Helical transmembrane passes span 28–48 (LFVT…PIGA), 60–80 (ELLT…LLFF), 98–118 (ALYV…SGLL), 154–174 (FPSG…LLFP), 178–198 (VAFI…GAHY), and 201–221 (DVIA…IVFA).

It belongs to the lipid A LpxE 1-phosphatase family.

Its subcellular location is the cell inner membrane. It participates in bacterial outer membrane biogenesis; LPS lipid A biosynthesis. Its function is as follows. Removes the 1-phosphate group from (tetraacyl) lipid A species, has no requirement for the Kdo(2) moiety of lipid A. Has no 4'-phosphatase activity. Reduces sensitivity of S.meliloti strain 1021 to the cationic antimicrobial peptide (CAMP) polymyxin B. The protein is Lipid A 1-phosphatase of Rhizobium johnstonii (strain DSM 114642 / LMG 32736 / 3841) (Rhizobium leguminosarum bv. viciae).